The chain runs to 1400 residues: DNA topoisomerase 2 (1400 aa).

Positions 1–30 (MSSFESDSASDAESAFSDASSDFTPSSSVK) are enriched in low complexity. The segment at 1 to 57 (MSSFESDSASDAESAFSDASSDFTPSSSVKSKGKVPLRDSTNTTAQPSAPATGDASD) is disordered. Polar residues predominate over residues 39–57 (DSTNTTAQPSAPATGDASD). Residues Asn117, Asn146, 174–176 (SSN), and 187–194 (GRNGYGAK) each bind ATP. The tract at residues 379 to 386 (TKKEKGKK) is interaction with DNA. Residue 415–417 (QTK) coordinates ATP. The 117-residue stretch at 497–613 (CTLILTEGDS…GLLEIPGFLL (117 aa)) folds into the Toprim domain. Mg(2+) contacts are provided by Glu503, Asp582, and Asp584. Residues 749-1214 (IPSILDGFKP…SAKDLWNSDL (466 aa)) form the Topo IIA-type catalytic domain. Tyr839 functions as the O-(5'-phospho-DNA)-tyrosine intermediate in the catalytic mechanism. The interval 1019 to 1028 (KLISSISLSN) is interaction with DNA. The disordered stretch occupies residues 1235 to 1400 (FGPTAKTSTR…NESDEDYMSE (166 aa)). Positions 1262-1271 (SSTPKASTPT) are enriched in low complexity. Positions 1312–1321 (PKRKTPKSKP) are enriched in basic residues. The segment covering 1389 to 1400 (DGNESDEDYMSE) has biased composition (acidic residues).

The protein belongs to the type II topoisomerase family. In terms of assembly, homodimer. It depends on Mg(2+) as a cofactor. Requires Mn(2+) as cofactor. The cofactor is Ca(2+).

It localises to the nucleus. It carries out the reaction ATP-dependent breakage, passage and rejoining of double-stranded DNA.. Functionally, control of topological states of DNA by transient breakage and subsequent rejoining of DNA strands. Topoisomerase II makes double-strand breaks. This is DNA topoisomerase 2 (TOP2) from Meyerozyma guilliermondii (strain ATCC 6260 / CBS 566 / DSM 6381 / JCM 1539 / NBRC 10279 / NRRL Y-324) (Yeast).